The following is a 266-amino-acid chain: Tryptophan synthase alpha chain (266 aa).

Residues Glu-50 and Asp-61 each act as proton acceptor in the active site.

The protein belongs to the TrpA family. In terms of assembly, tetramer of two alpha and two beta chains.

The enzyme catalyses (1S,2R)-1-C-(indol-3-yl)glycerol 3-phosphate + L-serine = D-glyceraldehyde 3-phosphate + L-tryptophan + H2O. It participates in amino-acid biosynthesis; L-tryptophan biosynthesis; L-tryptophan from chorismate: step 5/5. The alpha subunit is responsible for the aldol cleavage of indoleglycerol phosphate to indole and glyceraldehyde 3-phosphate. The sequence is that of Tryptophan synthase alpha chain from Alkaliphilus metalliredigens (strain QYMF).